Here is a 479-residue protein sequence, read N- to C-terminus: Flap endonuclease 1 (479 aa).

The interval 1–106 (MGIKGLTKFI…SELEKRGEKR (106 aa)) is N-domain. D34 is a Mg(2+) binding site. The DNA site is built by R47 and R72. The Mg(2+) site is built by D88, E160, E162, D181, and D183. Residues 124 to 266 (EIKKQSGRTV…KTAYNLIKEY (143 aa)) are I-domain. Residue E160 coordinates DNA. G244 and D246 together coordinate DNA. D246 contacts Mg(2+). Positions 349 to 357 (TQRRLDTFF) are interaction with PCNA. Residues 379–455 (AKGKGKKREL…NSDSGNIKNE (77 aa)) are disordered. Basic and acidic residues predominate over residues 403-428 (NIKDEKKNTDKMDELKNKSDENFVKD).

Belongs to the XPG/RAD2 endonuclease family. FEN1 subfamily. In terms of assembly, interacts with PCNA. Three molecules of FEN1 bind to one PCNA trimer with each molecule binding to one PCNA monomer. PCNA stimulates the nuclease activity without altering cleavage specificity. The cofactor is Mg(2+). Post-translationally, phosphorylated. Phosphorylation upon DNA damage induces relocalization to the nuclear plasma.

The protein resides in the nucleus. It is found in the nucleolus. The protein localises to the nucleoplasm. It localises to the mitochondrion. In terms of biological role, structure-specific nuclease with 5'-flap endonuclease and 5'-3' exonuclease activities involved in DNA replication and repair. During DNA replication, cleaves the 5'-overhanging flap structure that is generated by displacement synthesis when DNA polymerase encounters the 5'-end of a downstream Okazaki fragment. It enters the flap from the 5'-end and then tracks to cleave the flap base, leaving a nick for ligation. Also involved in the long patch base excision repair (LP-BER) pathway, by cleaving within the apurinic/apyrimidinic (AP) site-terminated flap. Acts as a genome stabilization factor that prevents flaps from equilibrating into structures that lead to duplications and deletions. Also possesses 5'-3' exonuclease activity on nicked or gapped double-stranded DNA, and exhibits RNase H activity. Also involved in replication and repair of rDNA and in repairing mitochondrial DNA. The chain is Flap endonuclease 1 from Plasmodium chabaudi chabaudi.